Reading from the N-terminus, the 197-residue chain is Presequence translocated-associated motor subunit PAM17, mitochondrial (197 aa).

Residues 1 to 14 (MFTSAIRLSSQRLF) constitute a mitochondrion transit peptide. The next 2 membrane-spanning stretches (helical) occupy residues 64–84 (INVG…WAYL) and 103–123 (VISA…PIVG).

This sequence belongs to the PAM17 family. In terms of assembly, component of the PAM complex, at least composed of mtHsp70, MGE1, TIM44, PAM16, PAM17 and PAM18/TIM14.

The protein localises to the mitochondrion inner membrane. Functionally, component of the PAM complex, a complex required for the translocation of transit peptide-containing proteins from the inner membrane into the mitochondrial matrix in an ATP-dependent manner. In the complex, it is required to organize PAM16-PAM18 (TIM16-TIM14) heterodimer. This chain is Presequence translocated-associated motor subunit PAM17, mitochondrial (PAM17), found in Saccharomyces cerevisiae (strain ATCC 204508 / S288c) (Baker's yeast).